We begin with the raw amino-acid sequence, 801 residues long: Cation/H(+) antiporter 7 (801 aa).

The next 13 membrane-spanning stretches (helical) occupy residues 58–78 (PNLE…EILF), 83–103 (IPIP…LFSY), 128–148 (GAFG…VGML), 154–174 (RAAL…YILM), 192–212 (EIIL…LTDL), 223–243 (VQSC…GTVL), 254–274 (IVIV…MLWI), 287–307 (VYIY…LNFF), 312–332 (YGWF…SALI), 340–360 (VGVL…ISWL), 377–397 (AISV…ITAF), 407–427 (IVLA…LGYI), and 438–458 (FTIA…AIEF).

This sequence belongs to the monovalent cation:proton antiporter 2 (CPA2) transporter (TC 2.A.37) family. CHX (TC 2.A.37.4) subfamily. Expressed in pollen.

Its subcellular location is the membrane. Functionally, may operate as a cation/H(+) antiporter. The polypeptide is Cation/H(+) antiporter 7 (CHX7) (Arabidopsis thaliana (Mouse-ear cress)).